A 327-amino-acid chain; its full sequence is Polyprenyl transferase esdpC (327 aa).

Transmembrane regions (helical) follow at residues 35 to 54, 73 to 93, 118 to 138, 140 to 160, 171 to 191, 202 to 222, 239 to 259, and 307 to 327; these read YNPL…AGAS, LLVF…NDWI, EALI…AYTL, GHNV…YPFG, YPQY…WLAI, IMES…LNTA, VYFL…ALVL, and ENFA…LLKS.

The protein belongs to the UbiA prenyltransferase family. It depends on Mg(2+) as a cofactor.

The protein localises to the membrane. It participates in secondary metabolite biosynthesis; terpenoid biosynthesis. Functionally, olyprenyl transferase; part of the cluster that mediates the biosynthesis of shearones, diterpenoid pyrones (DPs) which are structurally diverse meroterpenoids consisting of a diterpene linked by a pyrone, and which may exhibit a range of bioactivities. Within the pathway, esdpC takes part to the biosynthesis of the molecular scaffold by catalyzing the C-3 geranylgeranylation reaction of the alpha-pyrone produced by esdpA. The molecular scaffold is commonly biosynthesized by a series of enzymes including the non-reducing polyketide synthase (NR-PKS) esdpA that generates an alpha-pyrone; the prenyltransferase esdpC that attaches a geranylgeranyl pyrophosphate (GGPP) produced by the GGPP synthase (GGPPS) esdpD onto the pyrone unit; the FAD-dependent monooxygenase esdpE that converts an olefin on the diterpene unit into an epoxide; and the terpene cyclase esdpB that catalyzes the cyclization reactions to give the molecular backbone shearone A. In the modification steps, esdpF oxidizes the hydroxy group to a ketone at C-3 and esdpG then attaches hydroxy groups at both C-11 and C-12. After that, esdpI hydroxylates at C-20 and esdpH hydroxylates at C-6'. The ether bridge is generated by nucleophilic attack of the hydroxy group at C-20 to the carbonyl carbon at C-3. EsdpH can also functions prior to esdpI. The different combinations of these modification enzymes lead to the production of diverse shearone derivatives, shearone I being the end product of the pathway. The alpha-ketoglutarate-dependent dioxygenase esdpJ seems not to be involved in this pathway. The sequence is that of Polyprenyl transferase esdpC from Penicillium shearii (Eupenicillium shearii).